The chain runs to 669 residues: tRNA 5-methylaminomethyl-2-thiouridine biosynthesis bifunctional protein MnmC (669 aa).

Residues 1–246 (MIKNANIHFN…KRSMLIGTLK (246 aa)) form a tRNA (mnm(5)s(2)U34)-methyltransferase region. Residues 271-669 (IGGGIASSCI…IVRDLIRNKI (399 aa)) form an FAD-dependent cmnm(5)s(2)U34 oxidoreductase region.

The protein in the N-terminal section; belongs to the methyltransferase superfamily. tRNA (mnm(5)s(2)U34)-methyltransferase family. It in the C-terminal section; belongs to the DAO family. It depends on FAD as a cofactor.

The protein resides in the cytoplasm. It catalyses the reaction 5-aminomethyl-2-thiouridine(34) in tRNA + S-adenosyl-L-methionine = 5-methylaminomethyl-2-thiouridine(34) in tRNA + S-adenosyl-L-homocysteine + H(+). In terms of biological role, catalyzes the last two steps in the biosynthesis of 5-methylaminomethyl-2-thiouridine (mnm(5)s(2)U) at the wobble position (U34) in tRNA. Catalyzes the FAD-dependent demodification of cmnm(5)s(2)U34 to nm(5)s(2)U34, followed by the transfer of a methyl group from S-adenosyl-L-methionine to nm(5)s(2)U34, to form mnm(5)s(2)U34. This chain is tRNA 5-methylaminomethyl-2-thiouridine biosynthesis bifunctional protein MnmC, found in Pseudoalteromonas translucida (strain TAC 125).